We begin with the raw amino-acid sequence, 223 residues long: Glycolipid transfer protein 2 (223 aa).

A ganglioside GM3 (d18:1(4E)) is bound by residues Asp69, Asn73, Trp116, and His155.

The protein belongs to the GLTP family.

Transfers glycolipids in vitro. The sequence is that of Glycolipid transfer protein 2 from Arabidopsis thaliana (Mouse-ear cress).